The primary structure comprises 199 residues: MAKTTAAITFVTGNAKKLQEVQQILGQGFPFELTNRKIDLPELQGEPEDISREKCRLAAAEVKGPVMVEDTSLCFNALHGLPGPYIKWFLDKTGHVGLNNLLAAYPDKSAYAQCIFAFTTGPGAEIQTFVGRTEGKIVPARGPTDFGWDPVFQPDGFEETYAEMDKTIKNSISHRGRSLSALCAYFDTHKAELEKQLAA.

12 to 17 (TGNAKK) provides a ligand contact to ITP. E42 lines the Mg(2+) pocket. Residues K54, 70 to 71 (DT), K87, 146 to 149 (FGWD), K169, and 174 to 175 (HR) contribute to the ITP site.

It belongs to the HAM1 NTPase family. Homodimer. Mg(2+) is required as a cofactor. Mn(2+) serves as cofactor.

The protein localises to the cytoplasm. The catalysed reaction is ITP + H2O = IMP + diphosphate + H(+). It catalyses the reaction dITP + H2O = dIMP + diphosphate + H(+). The enzyme catalyses XTP + H2O = XMP + diphosphate + H(+). Pyrophosphatase that hydrolyzes non-canonical purine nucleotides such as inosine triphosphate (ITP), deoxyinosine triphosphate (dITP) or xanthosine 5'-triphosphate (XTP) to their respective monophosphate derivatives. The enzyme does not distinguish between the deoxy- and ribose forms. Probably excludes non-canonical purines from RNA and DNA precursor pools, thus preventing their incorporation into RNA and DNA and avoiding chromosomal lesions. This is Inosine triphosphate pyrophosphatase from Monosiga brevicollis (Choanoflagellate).